We begin with the raw amino-acid sequence, 199 residues long: Stress response protein SCP2 (199 aa).

This sequence belongs to the CAPAB/TerDEXZ family.

The protein localises to the cytoplasm. The chain is Stress response protein SCP2 (yceC) from Bacillus subtilis (strain 168).